The sequence spans 249 residues: Ribonuclease HII (249 aa).

A compositionally biased stretch (pro residues) spans 1–19 (MAPRPKAPPQPAEPDPALP). The segment at 1–31 (MAPRPKAPPQPAEPDPALPRPRGRPPKAGAV) is disordered. The RNase H type-2 domain occupies 52-240 (APVAGADEVG…VREQQLGLFP (189 aa)). Residues Asp-58, Glu-59, and Asp-149 each coordinate a divalent metal cation.

This sequence belongs to the RNase HII family. Requires Mn(2+) as cofactor. It depends on Mg(2+) as a cofactor.

Its subcellular location is the cytoplasm. The catalysed reaction is Endonucleolytic cleavage to 5'-phosphomonoester.. Its function is as follows. Endonuclease that specifically degrades the RNA of RNA-DNA hybrids. The sequence is that of Ribonuclease HII from Xanthobacter autotrophicus (strain ATCC BAA-1158 / Py2).